A 222-amino-acid chain; its full sequence is Phosphoglycolate phosphatase (222 aa).

The Nucleophile role is filled by Asp12. Mg(2+) contacts are provided by Asp12, Asp14, and Asp175.

Belongs to the HAD-like hydrolase superfamily. CbbY/CbbZ/Gph/YieH family. It depends on Mg(2+) as a cofactor.

It catalyses the reaction 2-phosphoglycolate + H2O = glycolate + phosphate. The protein operates within organic acid metabolism; glycolate biosynthesis; glycolate from 2-phosphoglycolate: step 1/1. In terms of biological role, specifically catalyzes the dephosphorylation of 2-phosphoglycolate. Is involved in the dissimilation of the intracellular 2-phosphoglycolate formed during the DNA repair of 3'-phosphoglycolate ends, a major class of DNA lesions induced by oxidative stress. In Chromobacterium violaceum (strain ATCC 12472 / DSM 30191 / JCM 1249 / CCUG 213 / NBRC 12614 / NCIMB 9131 / NCTC 9757 / MK), this protein is Phosphoglycolate phosphatase.